Consider the following 255-residue polypeptide: MVLLLVILIPVLVSSAGTSAHYEMLGTCRMVCDPYGGTKAPSTAATPDRGLMQSLPTFIQGPKGEAGRPGKAGPRGPPGEPGPPGPMGPPGEKGEPGRQGLPGPPGAPGLNAAGAISAATYSTVPKIAFYAGLKRQHEGYEVLKFDDVVTNLGNHYDPTTGKFTCSIPGIYFFTYHVLMRGGDGTSMWADLCKNNQVRASAIAQDADQNYDYASNSVVLHLEPGDEVYIKLDGGKAHGGNNNKYSTFSGFIIYAD.

A signal peptide spans 1–20; that stretch reads MVLLLVILIPVLVSSAGTSA. Positions 39 to 109 are disordered; sequence KAPSTAATPD…GLPGPPGAPG (71 aa). The region spanning 61 to 111 is the Collagen-like domain; the sequence is GPKGEAGRPGKAGPRGPPGEPGPPGPMGPPGEKGEPGRQGLPGPPGAPGLN. Over residues 75–89 the composition is skewed to pro residues; the sequence is RGPPGEPGPPGPMGP. The region spanning 122 to 255 is the C1q domain; the sequence is STVPKIAFYA…TFSGFIIYAD (134 aa).

Forms homooligomers. Interacts with ADGRB3. Interacts with C1QL2 and C1QL4, when proteins are coexpressed; this interaction does not occur after secretion. As to expression, highly expressed in adipose tissue, with expression levels at least 2 orders of magnitude higher than in other tissues, including brain and kidney.

It localises to the secreted. May regulate the number of excitatory synapses that are formed on hippocampus neurons. Has no effect on inhibitory synapses. Plays a role in glucose homeostasis. Via AMPK signaling pathway, stimulates glucose uptake in adipocytes, myotubes and hepatocytes and enhances insulin-stimulated glucose uptake. In a hepatoma cell line, reduces the expression of gluconeogenic enzymes G6PC1 and PCK1 and hence decreases de novo glucose production. In Homo sapiens (Human), this protein is Complement C1q-like protein 3 (C1QL3).